The chain runs to 650 residues: DNA ligase (650 aa).

Residues 30-34 (DEEYD), 79-80 (SL), and Asp108 each bind NAD(+). The active-site N6-AMP-lysine intermediate is Lys110. 3 residues coordinate NAD(+): Arg131, Glu165, and Lys304. Zn(2+)-binding residues include Cys398, Cys401, Cys414, and Cys419. The 78-residue stretch at 573–650 (PQDSPIAGKS…EEELGEILES (78 aa)) folds into the BRCT domain.

It belongs to the NAD-dependent DNA ligase family. LigA subfamily. The cofactor is Mg(2+). Mn(2+) serves as cofactor.

The enzyme catalyses NAD(+) + (deoxyribonucleotide)n-3'-hydroxyl + 5'-phospho-(deoxyribonucleotide)m = (deoxyribonucleotide)n+m + AMP + beta-nicotinamide D-nucleotide.. Functionally, DNA ligase that catalyzes the formation of phosphodiester linkages between 5'-phosphoryl and 3'-hydroxyl groups in double-stranded DNA using NAD as a coenzyme and as the energy source for the reaction. It is essential for DNA replication and repair of damaged DNA. This chain is DNA ligase, found in Wolinella succinogenes (strain ATCC 29543 / DSM 1740 / CCUG 13145 / JCM 31913 / LMG 7466 / NCTC 11488 / FDC 602W) (Vibrio succinogenes).